The sequence spans 392 residues: 5-azacytidine-induced protein 2 (392 aa).

The segment at 1-197 (MDALVEDDIC…IELQKAKQTD (197 aa)) is homodimerization. Coiled-coil stretches lie at residues 40–76 (ALVT…LIAR) and 102–196 (DRDN…AKQT). Residues 216–257 (SDNMQHAYWELKREMSNLHLVTQVQAELLRKLKTSTAIKKAC) form an interaction with TBK1 and IKBKE region. 2 positions are modified to phosphoserine: S318 and S353.

Homodimer. Interacts with IKBKE. Interacts with TBK1. Interacts with TICAM1. Interacts with TAX1BP1. Interacts with CALCOCO2. As to quaternary structure, (Microbial infection) Interacts with vaccinia virus protein C6. Ubiquitinated via 'Lys-48'-linked polyubiquitination by TRIM38, leading to its degradation. As to expression, widely expressed. Abundant expression seen in the pancreas and testis.

Its subcellular location is the cytoplasm. In terms of biological role, adapter protein which binds TBK1 and IKBKE playing a role in antiviral innate immunity. Activates serine/threonine-protein kinase TBK1 and facilitates its oligomerization. Enhances the phosphorylation of NF-kappa-B p65 subunit RELA by TBK1. Promotes TBK1-induced as well as TNF-alpha or PMA-induced activation of NF-kappa-B. Participates in IFNB promoter activation via TICAM1. The chain is 5-azacytidine-induced protein 2 (AZI2) from Homo sapiens (Human).